The following is a 1031-amino-acid chain: Putative glycine dehydrogenase (decarboxylating), mitochondrial (1031 aa).

The transit peptide at 1-49 directs the protein to the mitochondrion; that stretch reads MFDSFMKRNQLALIMFRACSKLQYHGVNTSLSRHLFLAKRNLSISSACL. Lys-783 carries the post-translational modification N6-(pyridoxal phosphate)lysine.

Belongs to the GcvP family. Pyridoxal 5'-phosphate serves as cofactor.

It is found in the mitochondrion. It carries out the reaction N(6)-[(R)-lipoyl]-L-lysyl-[glycine-cleavage complex H protein] + glycine + H(+) = N(6)-[(R)-S(8)-aminomethyldihydrolipoyl]-L-lysyl-[glycine-cleavage complex H protein] + CO2. The glycine cleavage system catalyzes the degradation of glycine. The P protein binds the alpha-amino group of glycine through its pyridoxal phosphate cofactor; CO(2) is released and the remaining methylamine moiety is then transferred to the lipoamide cofactor of the H protein. The polypeptide is Putative glycine dehydrogenase (decarboxylating), mitochondrial (gcv2) (Schizosaccharomyces pombe (strain 972 / ATCC 24843) (Fission yeast)).